Consider the following 279-residue polypeptide: Calcium-activated potassium channel subunit beta-3 (279 aa).

Residues 1–60 (MDFSPSSELGFHFVAFILLTRHRTAFPASGKKRETDYSDGDPLDVHKRLPSSAGEDRAVM) lie on the Cytoplasmic side of the membrane. The helical transmembrane segment at 61–81 (LGFAMMGFSVLMFFLLGTTIL) threads the bilayer. Residues 82–207 (KPFMLSIQRE…DVILIKKYDQ (126 aa)) lie on the Extracellular side of the membrane. Asparagine 131 carries N-linked (GlcNAc...) asparagine glycosylation. Residues 208 to 228 (MAIFHCLFWPSLTLLGGALIV) traverse the membrane as a helical segment. The Cytoplasmic portion of the chain corresponds to 229–279 (GMVRLTQHLSLLCEKYSTVVRDEVGGKVPYIEQHQFKLCIMRRSKGRAEKS).

The protein belongs to the KCNMB (TC 8.A.14.1) family. KCNMB3 subfamily. As to quaternary structure, interacts with KCNMA1 tetramer. There are probably 4 molecules of KCMNB3 per KCNMA1 tetramer. Post-translationally, N-glycosylated. The extracellular domain contains disulfide bond essential for the gating mechanism. As to expression, isoform 1, isoform 3 and isoform 4 are widely expressed. Isoform 2 is expressed placenta, pancreas, kidney and heart. Isoform 1 and isoform 3 are highly expressed in pancreas and testis.

The protein resides in the membrane. Its function is as follows. Regulatory subunit of the calcium activated potassium KCNMA1 (maxiK) channel. Modulates the calcium sensitivity and gating kinetics of KCNMA1, thereby contributing to KCNMA1 channel diversity. Alters the functional properties of the current expressed by the KCNMA1 channel. Isoform 2, isoform 3 and isoform 4 partially inactivate the current of KCNBMA. Isoform 4 induces a fast and incomplete inactivation of KCNMA1 channel that is detectable only at large depolarizations. In contrast, isoform 1 does not induce detectable inactivation of KCNMA1. Two or more subunits of KCNMB3 are required to block the KCNMA1 tetramer. The protein is Calcium-activated potassium channel subunit beta-3 (KCNMB3) of Homo sapiens (Human).